We begin with the raw amino-acid sequence, 540 residues long: Chaperonin GroEL 3 (540 aa).

ATP is bound by residues 30–33, K51, 87–91, G415, 479–481, and D495; these read TLGP, DGTTT, and NAA.

It belongs to the chaperonin (HSP60) family. In terms of assembly, forms a cylinder of 14 subunits composed of two heptameric rings stacked back-to-back. Interacts with the co-chaperonin GroES.

It is found in the cytoplasm. It carries out the reaction ATP + H2O + a folded polypeptide = ADP + phosphate + an unfolded polypeptide.. Together with its co-chaperonin GroES, plays an essential role in assisting protein folding. The GroEL-GroES system forms a nano-cage that allows encapsulation of the non-native substrate proteins and provides a physical environment optimized to promote and accelerate protein folding. This is Chaperonin GroEL 3 from Burkholderia cenocepacia (strain HI2424).